The chain runs to 425 residues: Pectate lyase L (425 aa).

The first 25 residues, 1–25, serve as a signal peptide directing secretion; the sequence is MKYLNCFISTGLAAFFLVNSTSVLA. A disulfide bond links Cys-28 and Cys-114. Ca(2+)-binding residues include Asp-209, Asp-233, Asp-234, and Asp-237. Residue Lys-273 is the Proton acceptor of the active site. Asn-402, Ser-413, Ala-416, Asp-418, and Glu-423 together coordinate Ca(2+).

This sequence belongs to the polysaccharide lyase 9 family. Ca(2+) is required as a cofactor.

Its subcellular location is the secreted. The catalysed reaction is Eliminative cleavage of (1-&gt;4)-alpha-D-galacturonan to give oligosaccharides with 4-deoxy-alpha-D-galact-4-enuronosyl groups at their non-reducing ends.. It functions in the pathway glycan metabolism; pectin degradation; 2-dehydro-3-deoxy-D-gluconate from pectin: step 2/5. Presents an endo-cleaving activity on polygalacturonate or partially methylated pectin. The polypeptide is Pectate lyase L (pelL) (Dickeya chrysanthemi (Pectobacterium chrysanthemi)).